A 455-amino-acid chain; its full sequence is SVGFKAGVKDYKLTYYTPDNQTKDTDILAAFRVTPQPGVPPEEAGAAVAAESSTGTWTTVWTDGLTSLDRYKGRCYHIEPVAGEENQFIAYVAYPLDLFEEGSVTNMFTSIVGNVFGFKALRALRLEDLRIPNAYVKTFQGPPHGIQVERDKLNKYGRPLLGCTIKPKLGLSAKNYGRAVYECLRGGLDFTKDDENVNSQPFMRWRDRFLFCAEALYKAQAETGEIKGHYLNATAGTCEEMIKRAVFARELGVPIVMHDYLTGGFTANTSLAHYCRDNGLLLHIHRAMHAVIDRQKNHGMHFRVLAKALRLSGGDHIHSGTVVGKLEGEREITLGFVDLLRDDFVEKDRSRGIYFTQDWVSLPGVLPVASGGIHVWHMPALTEIFGDDSVLQFGGGTLGHPWGNAPGAVANRVALEACVQARNEGRDLASEGNQIIREASKWSPELAAACEVWKE.

Lysine 5 carries the N6,N6,N6-trimethyllysine modification. Substrate is bound by residues asparagine 114 and threonine 164. The Proton acceptor role is filled by lysine 166. Position 168 (lysine 168) interacts with substrate. 3 residues coordinate Mg(2+): lysine 192, aspartate 194, and glutamate 195. Position 192 is an N6-carboxylysine (lysine 192). Catalysis depends on histidine 285, which acts as the Proton acceptor. Positions 286, 318, and 370 each coordinate substrate.

This sequence belongs to the RuBisCO large chain family. Type I subfamily. In terms of assembly, heterohexadecamer of 8 large chains and 8 small chains; disulfide-linked. The disulfide link is formed within the large subunit homodimers. Mg(2+) is required as a cofactor. Post-translationally, the disulfide bond which can form in the large chain dimeric partners within the hexadecamer appears to be associated with oxidative stress and protein turnover.

The protein resides in the plastid. Its subcellular location is the chloroplast. It carries out the reaction 2 (2R)-3-phosphoglycerate + 2 H(+) = D-ribulose 1,5-bisphosphate + CO2 + H2O. The catalysed reaction is D-ribulose 1,5-bisphosphate + O2 = 2-phosphoglycolate + (2R)-3-phosphoglycerate + 2 H(+). In terms of biological role, ruBisCO catalyzes two reactions: the carboxylation of D-ribulose 1,5-bisphosphate, the primary event in carbon dioxide fixation, as well as the oxidative fragmentation of the pentose substrate in the photorespiration process. Both reactions occur simultaneously and in competition at the same active site. This chain is Ribulose bisphosphate carboxylase large chain, found in Lupinus microcarpus var. densiflorus (Whitewhorl lupine).